A 778-amino-acid chain; its full sequence is Probable cation-transporting ATPase exp7 (778 aa).

Topologically, residues 1 to 37 (MDKNKIMGLTQREVKERQAEGLVNDFTASASTSTWQI) are cytoplasmic. The chain crosses the membrane as a helical span at residues 38–57 (VKRNVFTLFNALNFAIALAL). The Extracellular portion of the chain corresponds to 58-64 (AFVQAWS). The helical transmembrane segment at 65–84 (NLVFFAVICFNAFSGIVTEL) threads the bilayer. Residues 85-209 (RAKHMVDKLN…PINSRIMKSL (125 aa)) are Cytoplasmic-facing. The chain crosses the membrane as a helical span at residues 210–229 (DKLAGFTGKIIIPFGLALLL). At 230 to 242 (EALLLKGLPLKSS) the chain is on the extracellular side. The chain crosses the membrane as a helical span at residues 243 to 260 (VVNSSTALLGMLPKGIAL). Residues 261–586 (LTITSLLTAV…FEGRRVVNNI (326 aa)) lie on the Cytoplasmic side of the membrane. The 4-aspartylphosphate intermediate role is filled by Asp-298. Residues Asp-532 and Asp-536 each contribute to the Mg(2+) site. The helical transmembrane segment at 587 to 606 (AHIAPIFLIKTIYSFLLAVI) threads the bilayer. Over 607–624 (CIASALLGRSEWILIFPF) the chain is Extracellular. Residues 625–645 (IPIQITMIDQFVEGFPPFVLT) form a helical membrane-spanning segment. The Cytoplasmic portion of the chain corresponds to 646 to 663 (FERNIKPVEQNFLRKSML). The helical transmembrane segment at 664–684 (RALPSALMVVFSVLFVKMFGA) threads the bilayer. Over 685–689 (SQGWS) the chain is Extracellular. Residues 690–708 (ELEISTLLYYLLGSIGFLS) traverse the membrane as a helical segment. At 709 to 716 (VFRACMPF) the chain is on the cytoplasmic side. A helical transmembrane segment spans residues 717-739 (TLWRVLLIVWSVGGFLATALFPR). Over 740–757 (IQKLLEISTLTEQTLPVY) the chain is Extracellular. A helical membrane pass occupies residues 758 to 777 (GVMMLVFTVIFILTSRYQAK). Lys-778 is a topological domain (cytoplasmic).

Belongs to the cation transport ATPase (P-type) (TC 3.A.3) family.

The protein resides in the cell membrane. The catalysed reaction is ATP + H2O = ADP + phosphate + H(+). The sequence is that of Probable cation-transporting ATPase exp7 (exp7) from Streptococcus pneumoniae serotype 4 (strain ATCC BAA-334 / TIGR4).